Reading from the N-terminus, the 419-residue chain is RNA polymerase sigma factor sigD, chloroplastic (419 aa).

A chloroplast-targeting transit peptide spans 1-52; sequence MATTIPTTATATMCPSPPVPTISPLLRTTHQCQPSPSLSSPFSIKLSTALVC. The short motif at 207-220 is the Polymerase core binding element; sequence DLIQEGSIGLLRGA. The segment at residues 377 to 396 is a DNA-binding region (H-T-H motif); sequence FEEIGKSLKLSRERVRQING.

It belongs to the sigma-70 factor family. In terms of tissue distribution, mostly expressed in leaves, and to a lesser extent in roots. Present in seedlings.

The protein resides in the plastid. The protein localises to the chloroplast. Its function is as follows. Sigma factors are initiation factors that promote the attachment of plastid-encoded RNA polymerase (PEP) to specific initiation sites and are then released. Regulates transcription of the ndhF gene which codes for a subunit of the plastid NDH [NAD(P)H dehydrogenase] complex. The polypeptide is RNA polymerase sigma factor sigD, chloroplastic (SIGD) (Arabidopsis thaliana (Mouse-ear cress)).